The primary structure comprises 162 residues: CASP-like protein BLE3 (162 aa).

The Cytoplasmic segment spans residues 1 to 7 (MAKVHRL). The chain crosses the membrane as a helical span at residues 8–28 (MNAVLRLAAAAAAATAAVVMV). Residues 29–50 (TSRETTSFFGIQMEAKYSYTPS) lie on the Extracellular side of the membrane. A helical transmembrane segment spans residues 51-71 (FIFFVVAYAVAAAYSLLVLAV). Residues 72 to 85 (PAGSALSRLALTTD) lie on the Cytoplasmic side of the membrane. Residues 86 to 106 (VVLGMVLAGAVASAGAISDIA) traverse the membrane as a helical segment. Residues 107-128 (KNGNSHAGWLPVCGQIHAYCNH) lie on the Extracellular side of the membrane. A helical membrane pass occupies residues 129–149 (VMAALIAGFVALAVHFVVVMY). Topologically, residues 150 to 162 (SLHIVTDVICPCH) are cytoplasmic.

This sequence belongs to the Casparian strip membrane proteins (CASP) family. As to quaternary structure, homodimer and heterodimers.

It is found in the cell membrane. Its function is as follows. Involved in cell elongation in rice through dual regulation by brassinolide and auxin. This chain is CASP-like protein BLE3 (BLE3), found in Oryza sativa subsp. indica (Rice).